The sequence spans 315 residues: Cobalamin biosynthesis protein CobD (315 aa).

Transmembrane regions (helical) follow at residues 54–74 (GLLF…ILFL), 78–98 (IAYW…LAMT), 152–172 (ADGV…LALM), 203–223 (IANF…SFIL), and 295–315 (LLYT…LLLF).

Belongs to the CobD/CbiB family.

The protein localises to the cell membrane. It functions in the pathway cofactor biosynthesis; adenosylcobalamin biosynthesis. Functionally, converts cobyric acid to cobinamide by the addition of aminopropanol on the F carboxylic group. In Listeria monocytogenes serotype 4b (strain F2365), this protein is Cobalamin biosynthesis protein CobD.